Here is a 336-residue protein sequence, read N- to C-terminus: Dihydroorotate dehydrogenase (quinone) (336 aa).

Residues 62 to 66 (AGLDK) and Thr86 each bind FMN. Lys66 provides a ligand contact to substrate. A substrate-binding site is contributed by 111 to 115 (NRMGF). 2 residues coordinate FMN: Asn139 and Asn172. Asn172 serves as a coordination point for substrate. Catalysis depends on Ser175, which acts as the Nucleophile. Asn177 contacts substrate. Lys217 and Thr245 together coordinate FMN. A substrate-binding site is contributed by 246–247 (NT). FMN-binding positions include Gly268, Gly297, and 318 to 319 (YS).

It belongs to the dihydroorotate dehydrogenase family. Type 2 subfamily. Monomer. Requires FMN as cofactor.

The protein localises to the cell membrane. The catalysed reaction is (S)-dihydroorotate + a quinone = orotate + a quinol. The protein operates within pyrimidine metabolism; UMP biosynthesis via de novo pathway; orotate from (S)-dihydroorotate (quinone route): step 1/1. Catalyzes the conversion of dihydroorotate to orotate with quinone as electron acceptor. The sequence is that of Dihydroorotate dehydrogenase (quinone) from Klebsiella pneumoniae subsp. pneumoniae (strain ATCC 700721 / MGH 78578).